We begin with the raw amino-acid sequence, 648 residues long: Transcription termination factor FttA (648 aa).

Residues 1-179 are not required for dimerization, required for cleavage at some sites; it reads MIKRETQVDQ…QVGRNIYRKP (179 aa). Residues 9–76 are KHa; that stretch reads DQILKDIRGI…ISIRPDPDVL (68 aa). The KHb stretch occupies residues 77-144; that stretch reads LPPEEAEKLI…WAPKVVRTPP (68 aa). The segment at 185-395 is metallo-beta-lactamase N-terminus; that stretch reads WIRITGLGGF…LVMESTYGGA (211 aa). Zn(2+) contacts are provided by His253, His255, Asp257, His258, His341, and Asp364. The tract at residues 396–589 is beta-Casp; that stretch reads NDIQMPREEA…MEVHTIDGFS (194 aa). The segment at 590–648 is metallo-beta-lactamase C-terminus; that stretch reads GHADRRELMNYVAKVRPRPERVITVHGEPQKCLDLATSIHRKFGLSTRAPNNLDTIRLR. His615 contributes to the Zn(2+) binding site.

Belongs to the metallo-beta-lactamase superfamily. RNA-metabolizing metallo-beta-lactamase-like family. FttA subfamily. In terms of assembly, homodimer. Interacts with RNA polymerase (RNAP), interacts with the Spt4-Spt5 complex. It depends on Zn(2+) as a cofactor.

With respect to regulation, endoRNase activity is inhibited by 1,10-phenanthroline. In terms of biological role, terminates transcription on the whole genome. Termination is linked to FttA-mediated RNA cleavage and does not require NTP hydrolysis. Cleaves endonucleolytically at the RNA exit channel of RNA polymerase (RNAP); the 5'-3' exonuclease activity of this protein degrades the nascent RNA released from RNAP. A single-stranded endoribonuclease (endoRNase) with a preference for cleavage at CA dinucleotides. Has 5'-3' exoribonuclease (exoRNase) activity on 5'-monophosphorylated RNA; this activity does not occur on 5'-tri-phosphorylated or 5'-OH substrates. Also has weak activity 5'-3' exodeoxyribonuclease activity on ssDNA. The sequence is that of Transcription termination factor FttA from Pyrococcus abyssi (strain GE5 / Orsay).